The sequence spans 197 residues: MRVAGGRALSRGAELRVPGGAKHGMCLLLGATGVGKTLLVKRLQEVSSRDGKGDLGEPPPTRPTVGTNLTDIVAQRKITIRELGGCMGPIWSSYYGNCRSLLFVMDASDPTQLSASCVQLLGLLSAEQLAEASVLILFNKIDLPCYMSTEEMKSLIRLPDIIACAKQNITTAEISAREGTGLAGVLAWLQATHRAND.

GTP contacts are provided by residues 30–37 (GATGVGKT), 82–86 (ELGGC), and 139–142 (NKID).

This sequence belongs to the small GTPase superfamily. Arf family. As to quaternary structure, interacts with RIGI; this interaction is GTP-dependent and induced upon viral infection; this interaction suppresses the RNA sensing activity of RIGI.

The protein localises to the cytoplasm. In terms of biological role, may suppress the RNA sensing activity of RIGI in a GTP-dependent. This chain is ADP-ribosylation factor-like protein 16, found in Homo sapiens (Human).